We begin with the raw amino-acid sequence, 200 residues long: Probable GTP-binding protein EngB (200 aa).

The EngB-type G domain maps to 26-200; the sequence is SIPEVALAGR…IYEIAQCIKK (175 aa). GTP is bound by residues 34–41, 61–65, 80–83, 147–150, and 179–181; these read GRSNVGKS, GCTRQ, DLPG, TKID, and VSS. Residues Ser-41 and Thr-63 each coordinate Mg(2+).

Belongs to the TRAFAC class TrmE-Era-EngA-EngB-Septin-like GTPase superfamily. EngB GTPase family. Requires Mg(2+) as cofactor.

Functionally, necessary for normal cell division and for the maintenance of normal septation. This Ehrlichia ruminantium (strain Gardel) protein is Probable GTP-binding protein EngB.